A 501-amino-acid polypeptide reads, in one-letter code: Histidine--tRNA ligase (501 aa).

The protein belongs to the class-II aminoacyl-tRNA synthetase family. In terms of assembly, homodimer.

The protein localises to the cytoplasm. It carries out the reaction tRNA(His) + L-histidine + ATP = L-histidyl-tRNA(His) + AMP + diphosphate + H(+). This chain is Histidine--tRNA ligase, found in Methylocella silvestris (strain DSM 15510 / CIP 108128 / LMG 27833 / NCIMB 13906 / BL2).